A 230-amino-acid chain; its full sequence is Ureidoacrylate amidohydrolase RutB (230 aa).

Residue D24 is the Proton acceptor of the active site. K133 is a catalytic residue. The active-site Nucleophile is the C166.

Belongs to the isochorismatase family. RutB subfamily.

The catalysed reaction is (Z)-3-ureidoacrylate + H2O + H(+) = (Z)-3-aminoacrylate + NH4(+) + CO2. The enzyme catalyses (Z)-3-ureidoacrylate + H2O = (Z)-3-aminoacrylate + carbamate + H(+). It carries out the reaction (Z)-2-methylureidoacrylate + H2O + H(+) = (Z)-2-methylaminoacrylate + NH4(+) + CO2. Its function is as follows. Hydrolyzes ureidoacrylate to form aminoacrylate and carbamate. The carbamate hydrolyzes spontaneously, thereby releasing one of the nitrogen atoms of the pyrimidine ring as ammonia and one of its carbon atoms as CO2. The sequence is that of Ureidoacrylate amidohydrolase RutB from Escherichia coli O150:H5 (strain SE15).